The chain runs to 210 residues: Thymidylate kinase (210 aa).

11-18 contributes to the ATP binding site; that stretch reads GLEGAGKS.

It belongs to the thymidylate kinase family.

It carries out the reaction dTMP + ATP = dTDP + ADP. In terms of biological role, phosphorylation of dTMP to form dTDP in both de novo and salvage pathways of dTTP synthesis. In Histophilus somni (strain 2336) (Haemophilus somnus), this protein is Thymidylate kinase.